We begin with the raw amino-acid sequence, 178 residues long: Probable DNA-directed RNA polymerase subunit delta (178 aa).

Residues 14 to 81 (LSMIEVAHAI…GENTWGLRTW (68 aa)) form the HTH HARE-type domain. The span at 120-143 (DDDVIDYDSDDPEDEEVEAEDTTS) shows a compositional bias: acidic residues. Positions 120-178 (DDDVIDYDSDDPEDEEVEAEDTTSDDAPAFEDLSNDDDTDVLPDGIEGQLSELNEDDEN) are disordered.

The protein belongs to the RpoE family. RNAP is composed of a core of 2 alpha, a beta and a beta' subunits. The core is associated with a delta subunit and one of several sigma factors.

Participates in both the initiation and recycling phases of transcription. In the presence of the delta subunit, RNAP displays an increased specificity of transcription, a decreased affinity for nucleic acids, and an increased efficiency of RNA synthesis because of enhanced recycling. The protein is Probable DNA-directed RNA polymerase subunit delta of Pediococcus pentosaceus (strain ATCC 25745 / CCUG 21536 / LMG 10740 / 183-1w).